The sequence spans 441 residues: Homogentisate 1,2-dioxygenase (441 aa).

Histidine 287 functions as the Proton acceptor in the catalytic mechanism. Residues histidine 330 and glutamate 336 each contribute to the Fe cation site. Residues tyrosine 345 and histidine 366 each coordinate homogentisate. Position 366 (histidine 366) interacts with Fe cation.

It belongs to the homogentisate dioxygenase family. In terms of assembly, hexamer; dimer of trimers. The cofactor is Fe cation.

The catalysed reaction is homogentisate + O2 = 4-maleylacetoacetate + H(+). The protein operates within amino-acid degradation; L-phenylalanine degradation; acetoacetate and fumarate from L-phenylalanine: step 4/6. Involved in the catabolism of homogentisate (2,5-dihydroxyphenylacetate or 2,5-OH-PhAc), a central intermediate in the degradation of phenylalanine and tyrosine. Catalyzes the oxidative ring cleavage of the aromatic ring of homogentisate to yield maleylacetoacetate. The polypeptide is Homogentisate 1,2-dioxygenase (Xanthomonas oryzae pv. oryzae (strain KACC10331 / KXO85)).